A 58-amino-acid polypeptide reads, in one-letter code: uncharacterized protein (58 aa).

The next 2 helical transmembrane spans lie at 5–25 (IAFE…IIAE) and 32–52 (WIVV…FKMI).

It localises to the cell membrane. This is an uncharacterized protein from Methanocaldococcus jannaschii (strain ATCC 43067 / DSM 2661 / JAL-1 / JCM 10045 / NBRC 100440) (Methanococcus jannaschii).